Consider the following 75-residue polypeptide: Protein SlyX homolog (75 aa).

This sequence belongs to the SlyX family.

This Vibrio atlanticus (strain LGP32) (Vibrio splendidus (strain Mel32)) protein is Protein SlyX homolog.